The primary structure comprises 630 residues: tRNA uridine 5-carboxymethylaminomethyl modification enzyme MnmG (630 aa).

13–18 (GGGHAG) is a binding site for FAD. 273-287 (GPRYCPSIEDKVMRF) is a binding site for NAD(+).

It belongs to the MnmG family. In terms of assembly, homodimer. Heterotetramer of two MnmE and two MnmG subunits. Requires FAD as cofactor.

The protein resides in the cytoplasm. In terms of biological role, NAD-binding protein involved in the addition of a carboxymethylaminomethyl (cmnm) group at the wobble position (U34) of certain tRNAs, forming tRNA-cmnm(5)s(2)U34. This chain is tRNA uridine 5-carboxymethylaminomethyl modification enzyme MnmG, found in Actinobacillus pleuropneumoniae serotype 3 (strain JL03).